The primary structure comprises 165 residues: Deoxyuridine 5'-triphosphate nucleotidohydrolase (165 aa).

It belongs to the dUTPase family. In terms of assembly, homotrimer. It depends on Mg(2+) as a cofactor.

Its subcellular location is the host cytoplasm. It is found in the virion. The catalysed reaction is dUTP + H2O = dUMP + diphosphate + H(+). Its function is as follows. The viral dUTPase may play a role in lowering the dUTP concentration in natural infections to minimize misincorporation of deoxyuridine into the viral DNA and ensure the fidelity of genome replication. The protein is Deoxyuridine 5'-triphosphate nucleotidohydrolase of African swine fever virus (isolate Tick/South Africa/Pretoriuskop Pr4/1996) (ASFV).